The primary structure comprises 633 residues: Threonine--tRNA ligase (633 aa).

A TGS domain is found at methionine 1–glutamine 59. A catalytic region spans residues aspartate 240–proline 532. Zn(2+) contacts are provided by cysteine 332, histidine 383, and histidine 509.

This sequence belongs to the class-II aminoacyl-tRNA synthetase family. In terms of assembly, homodimer. Requires Zn(2+) as cofactor.

Its subcellular location is the cytoplasm. It carries out the reaction tRNA(Thr) + L-threonine + ATP = L-threonyl-tRNA(Thr) + AMP + diphosphate + H(+). Catalyzes the attachment of threonine to tRNA(Thr) in a two-step reaction: L-threonine is first activated by ATP to form Thr-AMP and then transferred to the acceptor end of tRNA(Thr). Also edits incorrectly charged L-seryl-tRNA(Thr). In Wolbachia pipientis subsp. Culex pipiens (strain wPip), this protein is Threonine--tRNA ligase.